Here is a 113-residue protein sequence, read N- to C-terminus: U11-theraphotoxin-Hhn1h (113 aa).

An N-terminal signal peptide occupies residues 1–21; it reads MNTVRVTFLLVFVLVVSLGQA. Residues 22–74 constitute a propeptide that is removed on maturation; the sequence is DKDENRMEMQEKTEQGKSYLDFAENLLLQKLEELEAKLLEEDSEESRNSRQKR. The tract at residues 61–83 is disordered; the sequence is EEDSEESRNSRQKRRIGEGVPCD. Intrachain disulfides connect Cys-82–Cys-95 and Cys-89–Cys-110.

It belongs to the neurotoxin 14 (magi-1) family. 01 (HNTX-16) subfamily. As to expression, expressed by the venom gland.

The protein resides in the secreted. Probable ion channel inhibitor. This is U11-theraphotoxin-Hhn1h from Cyriopagopus hainanus (Chinese bird spider).